The chain runs to 329 residues: MVSIAINGFGRIGRLVLRIALERKNIDVVAINDPFISVDYAAYMFKYDSTHGKYKGEVSHDGSNLIINGKKVAVFQEKDPATLPWGKLGVDIAVDSTGVFKELDSAQKHIDAGAKKVVITAPSKTAPMFVVGVNEDKYNGEKIVSNASCTTNCLAPIAKIINDEFGIEEGLMTTVHSITATQKTVDGPSHKDWRGGRTASGNIIPSSTGAAKAVGKVLPELQGKLTGMAFRVPTTDVSVVDLTVKLVKAATYDEIKAAVKKVSEGKLKDVVGYTEDAVVSSDFLGDTHSTIFDAAAGIQLSPKFVKLVAWYDNEYGYSTRVVDLVEHVA.

Residues 11–12 (RI), D33, and E77 each bind NAD(+). A Phosphoserine modification is found at S148. A D-glyceraldehyde 3-phosphate-binding site is contributed by 148-150 (SCT). The active-site Nucleophile is C149. Phosphoserine is present on S177. Residue T179 participates in D-glyceraldehyde 3-phosphate binding. S200 bears the Phosphoserine mark. Residues 208–209 (TG) and R231 each bind D-glyceraldehyde 3-phosphate. Residue N313 coordinates NAD(+).

The protein belongs to the glyceraldehyde-3-phosphate dehydrogenase family. In terms of assembly, homotetramer.

The protein localises to the cytoplasm. The catalysed reaction is D-glyceraldehyde 3-phosphate + phosphate + NAD(+) = (2R)-3-phospho-glyceroyl phosphate + NADH + H(+). It functions in the pathway carbohydrate degradation; glycolysis; pyruvate from D-glyceraldehyde 3-phosphate: step 1/5. This chain is Glyceraldehyde-3-phosphate dehydrogenase 1, found in Kluyveromyces marxianus (Yeast).